An 893-amino-acid polypeptide reads, in one-letter code: DNA endonuclease RBBP8 (893 aa).

Residues 22–45 (ELWTKLKEYHDKEVQGLQVKVTKL) are essential for binding to the MRN complex and for RPA focus formation on DNA damage. The stretch at 35–84 (VQGLQVKVTKLKKERILDAQRLEEFFTKNQQLRDQQKVLQETIKILEDRL) forms a coiled coil. Residues 45–160 (LKKERILDAQ…AELACEENII (116 aa)) form a required for interaction with LMO4, probably by stabilizing the interaction through RPPB8 dimerization region. Residues K62 and K115 each participate in a glycyl lysine isopeptide (Lys-Gly) (interchain with G-Cter in SUMO2) cross-link. A coiled-coil region spans residues 117–138 (ITELMNEKNTLQEENKKLSEQL). A Glycyl lysine isopeptide (Lys-Gly) (interchain with G-Cter in SUMO2) cross-link involves residue K193. 2 positions are modified to phosphoserine: S233 and S276. The segment covering 296–307 (MESARSKEDSLR) has biased composition (basic and acidic residues). The interval 296-324 (MESARSKEDSLRFSDSASKTPPQEFTTRA) is disordered. Residues 308–324 (FSDSASKTPPQEFTTRA) show a composition bias toward polar residues. T315 carries the phosphothreonine modification. 3 positions are modified to phosphoserine: S325, S326, and S348. Glycyl lysine isopeptide (Lys-Gly) (interchain with G-Cter in SUMO2) cross-links involve residues K359 and K377. S378 is subject to Phosphoserine. Glycyl lysine isopeptide (Lys-Gly) (interchain with G-Cter in SUMO2) cross-links involve residues K394, K403, K409, and K437. A PXDLS motif motif is present at residues 489–493 (PLDLS). The damage-recruitment motif stretch occupies residues 508–556 (NETSKNKLKQATIYEALKPIPKGSSSGRKALSGDCMPAKDSWETYCLQP). Residue K525 forms a Glycyl lysine isopeptide (Lys-Gly) (interchain with G-Cter in SUMO2); alternate linkage. Glycyl lysine isopeptide (Lys-Gly) (interchain with G-Cter in SUMO2) cross-links involve residues K529, K570, and K576. K602 participates in a covalent cross-link: Glycyl lysine isopeptide (Lys-Gly) (interchain with G-Cter in SUMO2); alternate. Residues K611, K636, and K638 each participate in a glycyl lysine isopeptide (Lys-Gly) (interchain with G-Cter in SUMO2) cross-link. Positions 639 to 683 (ALPSNQDTSFENIQWSVDPGADLSQYKMDVTVIDTKDSSHSRLGG) are required for interaction with LMO4, probably by making physical contact with LMO4. The residue at position 662 (S662) is a Phosphoserine; by ATM. K674 is covalently cross-linked (Glycyl lysine isopeptide (Lys-Gly) (interchain with G-Cter in SUMO2)). S677 is subject to Phosphoserine. A Glycyl lysine isopeptide (Lys-Gly) (interchain with G-Cter in SUMO2) cross-link involves residue K716. The residue at position 720 (S720) is a Phosphoserine. S742 carries the post-translational modification Phosphoserine; by ATM. A Glycyl lysine isopeptide (Lys-Gly) (interchain with G-Cter in SUMO2) cross-link involves residue K778. The KLHL15-binding motif lies at 836 to 838 (FRY). Residues T843 and T855 each carry the phosphothreonine modification. K865 is covalently cross-linked (Glycyl lysine isopeptide (Lys-Gly) (interchain with G-Cter in SUMO2)). The interval 869 to 893 (DLSPRPKRRQPYNAVFSPKGKEQRT) is disordered.

The protein belongs to the COM1/SAE2/CtIP family. Homotetramer; formed by antiparallel association of helical extensions protruding from the N-termini of two parallel coiled-coil dimers. Forms a dumbbell-shaped particle in which polar globular domains are held about 30 nm apart by a central rod. Homotetramerization is required for DNA-end resection and repair. Interacts (via the PXDLS motif) with CTBP1; the interaction is disrupted via binding of the adenovirus E1A to CTBP1. Component of the BRCA1-RBBP8 complex. Interacts (the Ser-326 phosphorylated form) with BRCA1 (via the C-terminal BRCT domains): the interaction occurs in the G2 phase, ubiquitinates RBBP8 and involves RBBP8 in BRCA1-dependent G2/M checkpoint control on DNA damage. Interacts with RB1. Interacts with the MRN complex. Interacts directly with MRE11; the interaction is required for efficient homologous recombination (HR) and regulation of the MRN complex. Interacts (when phosphorylated by CDK1) with NBN; promoting association with the MRN complex. Interacts with LMO4 (via the LIM zinc-binding 1 domain). Interacts with SIAH1. Interacts with RNF138. Interacts with EXD2. Interacts with CUL3 and KLHL15; this interaction leads to RBBP8 proteasomal degradation. Directly interacts with PIN1; this interaction depends upon RBBP8 phosphorylation, predominantly at Thr-315. Interacts with FZR1; this interaction leads to APC/C-mediated RBBP8 proteasomal degradation. Interacts with AUNIP; leading to recruit RBBP8 to sites of DNA damage. Interacts with SAMHD1. Interacts with HDGFL2. Post-translationally, hyperphosphorylation upon ionizing radiation results in dissociation from BRCA1. Phosphorylation at Thr-843 by CDK1 is essential for the recruitment to DNA and the DNA repair function. Phosphorylation at Thr-843 and Thr-855 promote interaction with NBN and recruitment to double-strand breaks (DSBs). Phosphorylated on Ser-326 as cells enter G2 phase. Phosphorylated at Ser-326 as cells enter G2 phase. This phosphorylation is required for binding BRCA1 and for the G2/M DNA damage transition checkpoint control. Phosphorylation at Thr-315 is required for PIN1-binding, while phosphorylation at Ser-276 serves as a PIN1 isomerization site. Phosphorylation at Thr-315 is cell-cycle dependent. It steadily increases during S phase, peaks at late S/G2 phase, and drops at G1. Phosphorylation is not required for tetramerization. Binds to DNA more strongly when dephosphorylated. Ubiquitinated. Ubiquitination at multiple sites by BRCA1 (via its N-terminal RING domain) does not lead to its proteasomal degradation but instead the ubiquitinated RBBP8 binds to chromatin following DNA damage and may play a role in G2/M checkpoint control. Ubiquitinated by RNF138 at its N-terminus. Ubiquitinated through 'Lys-48' by the E3 CUL3-KLHL15 complex; this modification leads to proteasomal degradation. Ubiquitinated by the E3 FZR1/APC/C complex; this modification leads to proteasomal degradation.

The protein resides in the nucleus. It is found in the chromosome. Functionally, endonuclease that cooperates with the MRE11-RAD50-NBN (MRN) complex in DNA-end resection, the first step of double-strand break (DSB) repair through the homologous recombination (HR) pathway. HR is restricted to S and G2 phases of the cell cycle and preferentially repairs DSBs resulting from replication fork collapse. Key determinant of DSB repair pathway choice, as it commits cells to HR by preventing classical non-homologous end-joining (NHEJ). Specifically promotes the endonuclease activity of the MRN complex to clear DNA ends containing protein adducts: recruited to DSBs by NBN following phosphorylation by CDK1, and promotes the endonuclease activity of MRE11 to clear protein-DNA adducts and generate clean double-strand break ends. Functions downstream of the MRN complex and ATM, promotes ATR activation and its recruitment to DSBs in the S/G2 phase facilitating the generation of ssDNA. Component of the BRCA1-RBBP8 complex that regulates CHEK1 activation and controls cell cycle G2/M checkpoints on DNA damage. During immunoglobulin heavy chain class-switch recombination, promotes microhomology-mediated alternative end joining (A-NHEJ) and plays an essential role in chromosomal translocations. Binds preferentially to DNA Y-junctions and to DNA substrates with blocked ends and promotes intermolecular DNA bridging. This chain is DNA endonuclease RBBP8 (Rbbp8), found in Mus musculus (Mouse).